A 385-amino-acid polypeptide reads, in one-letter code: Phosphorylated adapter RNA export protein (385 aa).

The span at 1–18 shows a compositional bias: acidic residues; it reads MALEAGDMEEGQLSDSDS. Positions 1 to 28 are disordered; it reads MALEAGDMEEGQLSDSDSDMTVVPSDRP. Alanine 2 is subject to N-acetylalanine. The tract at residues 2–320 is necessary for interaction with CBP80; the sequence is ALEAGDMEEG…KAARKRRTQL (319 aa). Phosphoserine is present on residues serine 14, serine 16, serine 56, serine 57, serine 60, and serine 63. The Nuclear localization signal motif lies at 71-74; it reads KRKR. Residues 75–101 are disordered; the sequence is QKCHNTPPKPEPFPFGPSGQKTALNGG. Residues 120–129 carry the Nuclear export signal motif; that stretch reads VATELGILGM. Positions 164–184 are enriched in basic and acidic residues; sequence KDLDEYMHGDKKPGSKEDENG. Positions 164-192 are disordered; the sequence is KDLDEYMHGDKKPGSKEDENGQGHLKRKR. The Nuclear localization signal motif lies at 189 to 192; sequence KRKR. The interval 219–319 is sufficient for poly U RNA-binding; it reads EKVADEIAFR…KKAARKRRTQ (101 aa). The segment at 270 to 278 is necessary for poly U RNA-binding and snRNA export; sequence GSRRRTPGG. At threonine 287 the chain carries Phosphothreonine. The tract at residues 335 to 385 is disordered; the sequence is QEDDDTSRETFASDTNEALASLDEAQEGPGETKLDAEEAIEVDHPQDLDIF. Positions 343 to 352 are enriched in polar residues; that stretch reads ETFASDTNEA. The residue at position 347 (serine 347) is a Phosphoserine. Residues 364-385 are compositionally biased toward basic and acidic residues; sequence GETKLDAEEAIEVDHPQDLDIF.

The protein belongs to the PHAX family. In terms of assembly, found in a U snRNA export complex with PHAX/RNUXA, NCBP1/CBP80, NCBP2/CBP20, RAN, XPO1 and m7G-capped RNA. Part of a precomplex with PHAX/RNUXA, NCBP1/CBP80, NCBP2/CBP20 and m7G-capped RNA. Interacts with NCBP1/CBP80. Found in a complex with snoRNA. Interacts with NCBP2/CBP20. Interacts with DDX39A; this interaction stimulates PHAX RNA binding activity. Post-translationally, phosphorylated in the nucleus. Dephosphorylated in the cytoplasm.

The protein localises to the nucleus. Its subcellular location is the nucleoplasm. It is found in the cajal body. It localises to the cytoplasm. Its function is as follows. A phosphoprotein adapter involved in the XPO1-mediated U snRNA export from the nucleus. Bridge components required for U snRNA export, the cap binding complex (CBC)-bound snRNA on the one hand and the GTPase Ran in its active GTP-bound form together with the export receptor XPO1 on the other. Its phosphorylation in the nucleus is required for U snRNA export complex assembly and export, while its dephosphorylation in the cytoplasm causes export complex disassembly. It is recycled back to the nucleus via the importin alpha/beta heterodimeric import receptor. The directionality of nuclear export is thought to be conferred by an asymmetric distribution of the GTP- and GDP-bound forms of Ran between the cytoplasm and nucleus. Its compartmentalized phosphorylation cycle may also contribute to the directionality of export. Binds strongly to m7G-capped U1 and U5 small nuclear RNAs (snRNAs) in a sequence-unspecific manner and phosphorylation-independent manner. Also plays a role in the biogenesis of U3 small nucleolar RNA (snoRNA). Involved in the U3 snoRNA transport from nucleoplasm to Cajal bodies. Binds strongly to m7G-capped U3, U8 and U13 precursor snoRNAs and weakly to trimethylated (TMG)-capped U3, U8 and U13 snoRNAs. Also binds to telomerase RNA. The sequence is that of Phosphorylated adapter RNA export protein (Phax) from Mus musculus (Mouse).